A 475-amino-acid chain; its full sequence is MGRTLAEKVWDDHVVRRAEGEPDLLFIDLHLLHEVTSPQAFDGLRQAGRPVRRLDLTIATEDHNTPTLDIDKPIADPVSRAQLETLRKNCADFGVRLHPLGDVEQGVVHVVGPQLGLTQPGTTVVCGDSHTSTHGAFGALAFGIGTSQVEHVLATQTLPLARPKTMAITVEGELPDEVTAKDLILAIIARIGTGGGQGYILEYRGSAIEKLSMEARMTICNMSIEAGARAGMIAPDATTFDYLEGRDHAPRGEDWDAAVAYWKTLRSDDDAVFDAEVVIDAAELAPFVTWGTNPGQGAPLSANVPDPASYEDASERFAAEKALEYMGLTAGQALRDINVDTVFVGSCTNGRIEDLRNAAAVLDGRKVADGVRMLIVPGSVRVALQAVAEGLDKVFTEAGAEWRHAGCSMCLGMNPDQLAPGERSASTSNRNFEGRQGKGGRTHLVSPQVAAATAVLGHLASPADLSDTRTPAGVR.

3 residues coordinate [4Fe-4S] cluster: Cys-347, Cys-407, and Cys-410. Residues 418–442 form a disordered region; the sequence is LAPGERSASTSNRNFEGRQGKGGRT.

The protein belongs to the aconitase/IPM isomerase family. LeuC type 1 subfamily. In terms of assembly, heterodimer of LeuC and LeuD. It depends on [4Fe-4S] cluster as a cofactor.

It carries out the reaction (2R,3S)-3-isopropylmalate = (2S)-2-isopropylmalate. It participates in amino-acid biosynthesis; L-leucine biosynthesis; L-leucine from 3-methyl-2-oxobutanoate: step 2/4. Functionally, catalyzes the isomerization between 2-isopropylmalate and 3-isopropylmalate, via the formation of 2-isopropylmaleate. The polypeptide is 3-isopropylmalate dehydratase large subunit (Streptomyces griseus subsp. griseus (strain JCM 4626 / CBS 651.72 / NBRC 13350 / KCC S-0626 / ISP 5235)).